A 148-amino-acid chain; its full sequence is Transcription antitermination protein NusB (148 aa).

The protein belongs to the NusB family.

Involved in transcription antitermination. Required for transcription of ribosomal RNA (rRNA) genes. Binds specifically to the boxA antiterminator sequence of the ribosomal RNA (rrn) operons. This chain is Transcription antitermination protein NusB, found in Nitrosococcus oceani (strain ATCC 19707 / BCRC 17464 / JCM 30415 / NCIMB 11848 / C-107).